The chain runs to 192 residues: Sarcoplasmic calcium-binding protein, alpha-B and -A chains (192 aa).

Ala-1 bears the N-acetylalanine mark. EF-hand domains lie at 4-39 (WDNR…NTLI), 56-91 (IMRN…HCQG), 100-135 (AFKV…RSAF), and 136-171 (AEVK…YAQF). Residues Asp-17, Asp-19, Asp-21, Asp-28, Asp-69, Asn-71, Asp-73, Glu-75, Glu-80, Asp-113, Asn-115, Asp-117, Lys-119, and Glu-124 each contribute to the Ca(2+) site.

As to quaternary structure, SCPs from crayfish, lobster, and shrimp are polymorphic dimers; three isotypes (alpha-alpha, alpha-beta, and beta-beta) have been identified.

Functionally, like parvalbumins, SCPs seem to be more abundant in fast contracting muscles, but no functional relationship can be established from this distribution. This chain is Sarcoplasmic calcium-binding protein, alpha-B and -A chains, found in Penaeus sp. (Penoeid shrimp).